The sequence spans 445 residues: MRYHPHTPEDVRAMLDVIGAESLDDLFRSIPERLRLARPLDLPPAADEITLFAELRALAARDDTAHPPFVGAGCYPHHVPPAVDQLLLRGEFFTAYTPYQPEVSQGTLQALFEWQTFVCLLTGMDVSNASMYDGATAMAEAALMATRVTGRSKIVVSAAVHPEYRKVLATYLRSTGDEIVTVPFGADGRTDLRALEAAVDGGTAAVIVGYPSFLGVVDALPQAAAIAKKAGALTVAVTAEAVALGLLQAPGALGADVAVGTFQSFGNPMSFGGPAPGFFAIREQFVRQMPGRVCGATVDKHGRRGFVLTLSTREQHIRREKATSNICTNSGLAALAATIHLALLGKQGLAELARLNFARARMLKDALGRAGIAPLFSAPPFNELAFDVGDAEAVVARLAKRGIAAGAPLARWYPELPRAKGALLSVATELHTPELIELFAQSVKG.

Belongs to the GcvP family. N-terminal subunit subfamily. In terms of assembly, the glycine cleavage system is composed of four proteins: P, T, L and H. In this organism, the P 'protein' is a heterodimer of two subunits.

The enzyme catalyses N(6)-[(R)-lipoyl]-L-lysyl-[glycine-cleavage complex H protein] + glycine + H(+) = N(6)-[(R)-S(8)-aminomethyldihydrolipoyl]-L-lysyl-[glycine-cleavage complex H protein] + CO2. Its function is as follows. The glycine cleavage system catalyzes the degradation of glycine. The P protein binds the alpha-amino group of glycine through its pyridoxal phosphate cofactor; CO(2) is released and the remaining methylamine moiety is then transferred to the lipoamide cofactor of the H protein. This chain is Probable glycine dehydrogenase (decarboxylating) subunit 1, found in Anaeromyxobacter sp. (strain Fw109-5).